The primary structure comprises 383 residues: Sterol 24-C-methyltransferase ERG6 (383 aa).

S2 is modified (N-acetylserine). Position 99 is a phosphoserine (S99).

The protein belongs to the class I-like SAM-binding methyltransferase superfamily. Erg6/SMT family. As to quaternary structure, interacts with ERG28.

The protein resides in the microsome. It is found in the mitochondrion. The catalysed reaction is zymosterol + S-adenosyl-L-methionine = fecosterol + S-adenosyl-L-homocysteine + H(+). The protein operates within steroid metabolism; ergosterol biosynthesis; ergosterol from zymosterol: step 1/5. Sterol 24-C-methyltransferase; part of the third module of ergosterol biosynthesis pathway that includes the late steps of the pathway. ERG6 catalyzes the methyl transfer from S-adenosyl-methionine to the C-24 of zymosterol to form fecosterol. The third module or late pathway involves the ergosterol synthesis itself through consecutive reactions that mainly occur in the endoplasmic reticulum (ER) membrane. Firstly, the squalene synthase ERG9 catalyzes the condensation of 2 farnesyl pyrophosphate moieties to form squalene, which is the precursor of all steroids. Squalene synthase is crucial for balancing the incorporation of farnesyl diphosphate (FPP) into sterol and nonsterol isoprene synthesis. Secondly, the squalene epoxidase ERG1 catalyzes the stereospecific oxidation of squalene to (S)-2,3-epoxysqualene, which is considered to be a rate-limiting enzyme in steroid biosynthesis. Then, the lanosterol synthase ERG7 catalyzes the cyclization of (S)-2,3 oxidosqualene to lanosterol, a reaction that forms the sterol core. In the next steps, lanosterol is transformed to zymosterol through a complex process involving various demethylation, reduction and desaturation reactions. The lanosterol 14-alpha-demethylase ERG11 (also known as CYP51) catalyzes C14-demethylation of lanosterol to produce 4,4'-dimethyl cholesta-8,14,24-triene-3-beta-ol, which is critical for ergosterol biosynthesis. The C-14 reductase ERG24 reduces the C14=C15 double bond of 4,4-dimethyl-cholesta-8,14,24-trienol to produce 4,4-dimethyl-cholesta-8,24-dienol. 4,4-dimethyl-cholesta-8,24-dienol is substrate of the C-4 demethylation complex ERG25-ERG26-ERG27 in which ERG25 catalyzes the three-step monooxygenation required for the demethylation of 4,4-dimethyl and 4alpha-methylsterols, ERG26 catalyzes the oxidative decarboxylation that results in a reduction of the 3-beta-hydroxy group at the C-3 carbon to an oxo group, and ERG27 is responsible for the reduction of the keto group on the C-3. ERG28 has a role as a scaffold to help anchor ERG25, ERG26 and ERG27 to the endoplasmic reticulum and ERG29 regulates the activity of the iron-containing C4-methylsterol oxidase ERG25. Then, the sterol 24-C-methyltransferase ERG6 catalyzes the methyl transfer from S-adenosyl-methionine to the C-24 of zymosterol to form fecosterol. The C-8 sterol isomerase ERG2 catalyzes the reaction which results in unsaturation at C-7 in the B ring of sterols and thus converts fecosterol to episterol. The sterol-C5-desaturase ERG3 then catalyzes the introduction of a C-5 double bond in the B ring to produce 5-dehydroepisterol. The C-22 sterol desaturase ERG5 further converts 5-dehydroepisterol into ergosta-5,7,22,24(28)-tetraen-3beta-ol by forming the C-22(23) double bond in the sterol side chain. Finally, ergosta-5,7,22,24(28)-tetraen-3beta-ol is substrate of the C-24(28) sterol reductase ERG4 to produce ergosterol. In Saccharomyces cerevisiae (strain ATCC 204508 / S288c) (Baker's yeast), this protein is Sterol 24-C-methyltransferase ERG6.